The primary structure comprises 363 residues: SWIRM domain-containing protein YOR338W (363 aa).

Disordered stretches follow at residues 1–22 (MLDN…GGIN) and 186–208 (LYED…VPVR). Over residues 186–196 (LYEDDGNRSEN) the composition is skewed to basic and acidic residues. An SWIRM domain is found at 266–363 (LKVEWKGSPM…LQDKHFEKYL (98 aa)).

The protein is SWIRM domain-containing protein YOR338W of Saccharomyces cerevisiae (strain ATCC 204508 / S288c) (Baker's yeast).